A 436-amino-acid chain; its full sequence is Protein GOLM2 (436 aa).

Met1 is subject to N-acetylmethionine. The Cytoplasmic segment spans residues 1–14 (MVGFGANRRAGRLP). Residues 15 to 35 (SLVLVVLLVVIVVLAFNYWSI) traverse the membrane as a helical; Signal-anchor for type II membrane protein segment. Residues 35 to 195 (ISSRHVLLQE…QFLQEQKQEA (161 aa)) adopt a coiled-coil conformation. Residues 36–436 (SSRHVLLQEE…YGKQHFNDVL (401 aa)) are Lumenal-facing. 2 stretches are compositionally biased toward basic and acidic residues: residues 193–207 (QEAH…KELD) and 224–247 (VADK…KRGG). The segment at 193 to 436 (QEAHKIQSND…YGKQHFNDVL (244 aa)) is disordered. 2 positions are modified to phosphoserine: Ser233 and Ser275. Polar residues-rich tracts occupy residues 275-295 (SVSQ…QPLS) and 305-321 (NHNG…SSPL). Residues Ser328 and Ser332 each carry the phosphoserine modification. Residues 344 to 362 (ATKDRVSDFHKLKQSRFFD) show a composition bias toward basic and acidic residues. Ser366 is subject to Phosphoserine. Positions 399-418 (YNEEEDGDGGEEDVQDDEER) are enriched in acidic residues. Basic and acidic residues predominate over residues 426–436 (DYGKQHFNDVL).

It belongs to the GOLM family.

The protein resides in the membrane. The sequence is that of Protein GOLM2 (GOLM2) from Pongo abelii (Sumatran orangutan).